Reading from the N-terminus, the 223-residue chain is Ribonuclease 3 (223 aa).

The 124-residue stretch at 4–127 (LENLQKLLGY…VMGAVYLEAG (124 aa)) folds into the RNase III domain. Mg(2+) is bound at residue Glu40. Asp44 is an active-site residue. Mg(2+) is bound by residues Asp113 and Glu116. Glu116 is a catalytic residue. In terms of domain architecture, DRBM spans 154-223 (DYKTALQEIT…AKIALEKMKK (70 aa)).

The protein belongs to the ribonuclease III family. Homodimer. Mg(2+) is required as a cofactor.

The protein localises to the cytoplasm. It catalyses the reaction Endonucleolytic cleavage to 5'-phosphomonoester.. Digests double-stranded RNA. Involved in the processing of primary rRNA transcript to yield the immediate precursors to the large and small rRNAs (23S and 16S). Processes some mRNAs, and tRNAs when they are encoded in the rRNA operon. Processes pre-crRNA and tracrRNA of type II CRISPR loci if present in the organism. The protein is Ribonuclease 3 of Campylobacter curvus (strain 525.92).